We begin with the raw amino-acid sequence, 462 residues long: Zinc finger CCCH domain-containing protein 34 (462 aa).

Basic and acidic residues predominate over residues 1–13 (MERYGRPGEEGSR). The segment at 1–26 (MERYGRPGEEGSRSDPSLEWTSHGGE) is disordered. 3 consecutive C3H1-type zinc fingers follow at residues 54-82 (RPDE…HPRD), 100-128 (RMGH…HPRQ), and 148-176 (RPGE…HPVP). Positions 288–303 (TGTYQSVPSSNSTSKE) are enriched in polar residues. Residues 288 to 310 (TGTYQSVPSSNSTSKEFPQRPDQ) are disordered. C3H1-type zinc fingers lie at residues 307-335 (RPDQ…HPVD) and 353-381 (RPGV…HSMS). A compositionally biased stretch (low complexity) spans 405-418 (SSSLSGSSAPVSSS). The segment at 405–462 (SSSLSGSSAPVSSSNEPTKEAVTPAVSSMVSGLSRPEPAETSGDSASVSGSIEAKTSS) is disordered. Positions 446-462 (SGDSASVSGSIEAKTSS) are enriched in polar residues.

The protein localises to the nucleus. The protein is Zinc finger CCCH domain-containing protein 34 of Arabidopsis thaliana (Mouse-ear cress).